A 200-amino-acid polypeptide reads, in one-letter code: Small ribosomal subunit protein uS4 (200 aa).

Residues 22-42 form a disordered region; it reads TGKELEKRPYAPGPHGPNQRK. Residues 92 to 152 enclose the S4 RNA-binding domain; sequence ARLDNLVYRM…EKSNNLVVVK (61 aa).

The protein belongs to the universal ribosomal protein uS4 family. Part of the 30S ribosomal subunit. Contacts protein S5. The interaction surface between S4 and S5 is involved in control of translational fidelity.

One of the primary rRNA binding proteins, it binds directly to 16S rRNA where it nucleates assembly of the body of the 30S subunit. Its function is as follows. With S5 and S12 plays an important role in translational accuracy. This is Small ribosomal subunit protein uS4 from Bacillus thuringiensis subsp. konkukian (strain 97-27).